The following is a 234-amino-acid chain: BTB/POZ domain-containing protein KCTD5 (234 aa).

Ala2 carries the post-translational modification N-acetylalanine. In terms of domain architecture, BTB spans 44–146; the sequence is KWVRLNVGGT…LVKDKIRERD (103 aa). A disordered region spans residues 213-234; it reads PYGTTSEPSEKAKILQERGSRM. Basic and acidic residues predominate over residues 220 to 234; the sequence is PSEKAKILQERGSRM.

As to quaternary structure, homopentamer. Interacts (via C-terminus) with GRASP55/GORASP2. Interacts with CUL3 and with ubiquitinated proteins. Interacts with CRY1.

It is found in the cytoplasm. Its subcellular location is the cytosol. The protein resides in the nucleus. Its function is as follows. Its interaction with CUL3 suggests that it may act as a substrate adapter in some E3 ligase complex. Does not affect the function of Kv channel Kv2.1/KCNB1, Kv1.2/KCNA2, Kv4.2/KCND2 and Kv3.4/KCNC4. The sequence is that of BTB/POZ domain-containing protein KCTD5 (Kctd5) from Rattus norvegicus (Rat).